The chain runs to 63 residues: MISRFCLLFLLVFVVSKIQAAEDFNEENEVDDLDDLDFLDDLDLDLSPEELEYLENWVKEFED.

Residues methionine 1–alanine 20 form the signal peptide.

The protein belongs to the non-disulfide-bridged peptide (NDBP) superfamily. Long chain multifunctional peptide (group 2) family. As to expression, expressed by the venom gland.

The protein localises to the secreted. The protein is Anionic peptide NDBP7 of Lychas mucronatus (Chinese swimming scorpion).